The following is a 1506-amino-acid chain: DDB1- and CUL4-associated factor 1 (1506 aa).

The protein kinase-like stretch occupies residues 141–499; sequence QPLRTYSTGL…STLEILNLED (359 aa). Residues Ser-202 and Ser-254 each carry the phosphoserine modification. The tract at residues 241-275 is disordered; it reads RLDSSHKTSSRVNSATKPEEGGLKKNKSAKHGDRE. The Chromo domain maps to 561–592; that stretch reads SYTHEQIVEMMEFLIEYGPAQLYWEPAEVFLK. N6-acetyllysine is present on Lys-700. Phosphoserine is present on Ser-827. The LisH domain maps to 845-877; that stretch reads PEKELLLLIRNHLISKGLGETATVLTREADLPM. Thr-887 is modified (phosphothreonine). A phosphoserine mark is found at Ser-894 and Ser-897. 2 disordered regions span residues 916 to 946 and 977 to 999; these read ATVGASAPSAPPAHPPPRPPQGSLPLPGPSY and KSDHGAYSQSPAIKKQLDRHLPS. Over residues 924–943 the composition is skewed to pro residues; the sequence is SAPPAHPPPRPPQGSLPLPG. A phosphoserine mark is found at Ser-978 and Ser-999. 5 WD repeats span residues 1090 to 1129, 1132 to 1173, 1175 to 1212, 1214 to 1246, and 1247 to 1289; these read EDESGFTCCAFSARERFLMLGTCTGQLKLYNVFSGQEEAS, CHNS…DMKH, FTEDHYVEFSKHSQDRVIGTKGDIAHIYDIQTGNKLLT, FNPDLANNYKRNCATFNPTDDLVLNDGVLWDVR, and SAQA…LLHT. A WD repeat-like region region spans residues 1090–1289; that stretch reads EDESGFTCCA…DLRTFHLLHT (200 aa). 2 short sequence motifs (DWD box) span residues 1241-1248 and 1277-1284; these read VLWDVRSA and EIWDLRTF. The residue at position 1327 (Ser-1327) is a Phosphoserine. Residues 1392 to 1506 are disordered; the sequence is RLAEDEDEEE…EDDIILSLNE (115 aa). Acidic residues-rich tracts occupy residues 1395-1482 and 1489-1500; these read EDED…EEVE and DSSDNSDLEDDI. The interaction with NF2 stretch occupies residues 1417 to 1506; the sequence is DDDTDDLDEL…EDDIILSLNE (90 aa).

This sequence belongs to the VPRBP/DCAF1 family. In terms of assembly, component of the DCX (DDB1-CUL4-X-box) E3 ubiquitin-protein ligase complex, named CUL4A-RBX1-DDB1-DCAF1/VPRBP complex. Interacts with DDB1; the interaction is direct. Also forms a ternary complex with DDA1 and DDB1. Interacts with NF2 (via FERM domain). Component of the EDVP complex, a E3 ligase complex containing DYRK2, EDD/UBR5, DDB1 and DCAF1. Interacts with DYRK2; the interaction is direct. Interacts with RAG1; the interaction is direct. Interacts with LLGL1 and LLGL2. Interacts with histone H3. Interacts with ESR1 and LATS1; probably recruited by LATS1 to promote ESR1 ubiquitination and ubiquitin-mediated proteasomal degradation. Directly interacts with TET1, TET2 and TET3 (via C-terminus). Interacts with CEP78; promoting DCAF1 localization to centrosomes. As to expression, widely expressed. Expressed in oocytes and zygotes (at protein level).

The protein resides in the cytoplasm. Its subcellular location is the nucleus. It localises to the cytoskeleton. The protein localises to the microtubule organizing center. It is found in the centrosome. The enzyme catalyses L-seryl-[protein] + ATP = O-phospho-L-seryl-[protein] + ADP + H(+). It catalyses the reaction L-threonyl-[protein] + ATP = O-phospho-L-threonyl-[protein] + ADP + H(+). It participates in protein modification; protein ubiquitination. Functionally, acts both as a substrate recognition component of E3 ubiquitin-protein ligase complexes and as an atypical serine/threonine-protein kinase, playing key roles in various processes such as cell cycle, telomerase regulation and histone modification. Probable substrate-specific adapter of a DCX (DDB1-CUL4-X-box) E3 ubiquitin-protein ligase complex, named CUL4A-RBX1-DDB1-DCAF1/VPRBP complex, which mediates ubiquitination and proteasome-dependent degradation of proteins such as NF2. Involved in the turnover of methylated proteins: recognizes and binds methylated proteins via its chromo domain, leading to ubiquitination of target proteins by the RBX1-DDB1-DCAF1/VPRBP complex. The CUL4A-RBX1-DDB1-DCAF1/VPRBP complex is also involved in B-cell development: DCAF1 is recruited by RAG1 to ubiquitinate proteins, leading to limit error-prone repair during V(D)J recombination. Also part of the EDVP complex, an E3 ligase complex that mediates ubiquitination of proteins such as TERT, leading to TERT degradation and telomerase inhibition. The EDVP complex also mediates ubiquitination and degradation of CCP110. Also acts as an atypical serine/threonine-protein kinase that specifically mediates phosphorylation of 'Thr-120' of histone H2A (H2AT120ph) in a nucleosomal context, thereby repressing transcription. H2AT120ph is present in the regulatory region of many tumor suppresor genes, down-regulates their transcription and is present at high level in a number of tumors. Involved in JNK-mediated apoptosis during cell competition process via its interaction with LLGL1 and LLGL2. By acting on TET dioxygenses, essential for oocyte maintenance at the primordial follicle stage, hence essential for female fertility. This is DDB1- and CUL4-associated factor 1 from Mus musculus (Mouse).